Here is a 162-residue protein sequence, read N- to C-terminus: Ribonuclease (162 aa).

A signal peptide spans 1-29 (MKKISSVFTMFALIAAILFSGFIPQQAYA). Positions 30-53 (ETTLTPTATNKTASIQLTSDVHTL) are excised as a propeptide. The Proton acceptor role is filled by Glu-125. The active-site Proton donor is His-154.

This sequence belongs to the ribonuclease N1/T1 family.

It is found in the secreted. Functionally, this is a purine-specific ribonuclease. The polypeptide is Ribonuclease (Bacillus pumilus (Bacillus mesentericus)).